The primary structure comprises 787 residues: Filamentous growth regulator 27 (787 aa).

The disordered stretch occupies residues 1 to 22 (MSAPIVETKKASKRRIRRIPDD). The segment at residues 31-57 (CDNCKKRKFKCSGEKPCFECSKKGHDC) is a DNA-binding region (zn(2)-C6 fungal-type). A coiled-coil region spans residues 69–97 (GERMAKLKQKKDNNEKQRELVNEQIAQSS). Disordered stretches follow at residues 120-140 (SSHS…SSIP) and 200-221 (RHKS…KGGI). The segment covering 209–221 (DNNTNNVPKKGGI) has biased composition (polar residues).

It is found in the nucleus. Functionally, transcription factor involved in yeast cell adherence to silicone substrate, filamentous growth, and biofilm formation. The protein is Filamentous growth regulator 27 (FGR27) of Candida albicans (strain SC5314 / ATCC MYA-2876) (Yeast).